Here is a 1652-residue protein sequence, read N- to C-terminus: Venom factor (1652 aa).

Residues 1–22 (MEGMALYLVAALLIGFPASSFG) form the signal peptide. 4 residues coordinate Mg(2+): proline 519, aspartate 542, valine 543, and aspartate 545. 12 cysteine pairs are disulfide-bonded: cysteine 547–cysteine 808, cysteine 616–cysteine 651, cysteine 684–cysteine 711, cysteine 685–cysteine 718, cysteine 698–cysteine 719, cysteine 864–cysteine 1502, cysteine 1347–cysteine 1478, cysteine 1378–cysteine 1447, cysteine 1495–cysteine 1500, cysteine 1507–cysteine 1579, cysteine 1526–cysteine 1650, and cysteine 1626–cysteine 1635. Positions 657–740 (RRRRRSVVLL…REDELFLARS (84 aa)) are excised as a propeptide. The segment at 661 to 739 (RSVVLLDSKA…KREDELFLAR (79 aa)) is C3a-like domain. The Anaphylatoxin-like domain maps to 684-719 (CCEDGMHENPMGYSCEKREKYIQEGDACKAAFLECC). The tract at residues 743–754 (EDEFFGEDNIIS) is factor B binding site. Residues 992-1270 (HLIITPSGCG…VVGFQGLAEY (279 aa)) constitute a propeptide that is removed on maturation. A C3d-like domain region spans residues 992–1270 (HLIITPSGCG…VVGFQGLAEY (279 aa)). The isoglutamyl cysteine thioester (Cys-Gln) cross-link spans 1000–1003 (CGEQ). The interval 1197 to 1260 (VLMAASTERN…GGTYGQTQAT (64 aa)) is factor H binding site. Positions 1507 to 1650 (CSLLNQQKKI…LSNTLTIFGC (144 aa)) constitute an NTR domain.

Belongs to the venom complement C3 homolog family. In terms of assembly, heterotrimer of alpha, beta and gamma chains; disulfide-linked. Is active with factor B in the presence of factor D. Post-translationally, first processed by the removal of 4 Arg residues by furin-type protease, forming two chains, alpha and gamma/beta precursor, linked by a disulfide bond. Probably, a cobrin-like protease cleaves the C3a-like domain and then the C3d-like domain, generating the mature venom factor (VF). Expressed by the venom gland.

The protein localises to the secreted. Functionally, complement-activating protein in venom. It is a structural and functional analog of complement component C3b, the activated form of C3. It binds factor B (CFB), which is subsequently cleaved by factor D (CFD) to form the bimolecular complex VF/Bb. VF/Bb is a C3/C5 convertase that cleaves both complement components C3 and C5. Structurally, it resembles the C3b degradation product C3c, which is not able to form a C3/C5 convertase. Unlike C3b/Bb, VF/Bb is a stable complex and completely resistant to the actions of complement regulatory factors H (CFH) and I (CFI). Therefore, VF continuously activates complement resulting in the depletion of complement activity. This chain is Venom factor, found in Crotalus adamanteus (Eastern diamondback rattlesnake).